The chain runs to 114 residues: Large ribosomal subunit protein bL20 (114 aa).

Belongs to the bacterial ribosomal protein bL20 family.

In terms of biological role, binds directly to 23S ribosomal RNA and is necessary for the in vitro assembly process of the 50S ribosomal subunit. It is not involved in the protein synthesizing functions of that subunit. The protein is Large ribosomal subunit protein bL20 of Parabacteroides distasonis (strain ATCC 8503 / DSM 20701 / CIP 104284 / JCM 5825 / NCTC 11152).